A 345-amino-acid chain; its full sequence is uncharacterized protein (345 aa).

The protein resides in the plastid. The protein localises to the chloroplast. This is an uncharacterized protein from Chlamydomonas moewusii (Chlamydomonas eugametos).